A 4513-amino-acid chain; its full sequence is Dynein-1-beta heavy chain, flagellar inner arm I1 complex (4513 aa).

Residues 1 to 1806 (MEPGDEGKGH…IVKQVLSVFY (1806 aa)) are stem. 3 coiled-coil regions span residues 192-223 (KAAA…NQQD), 1544-1577 (TAQG…RQQF), and 1704-1727 (THEC…LKKK). 4 AAA regions span residues 1807-2028 (YGYE…PIAR), 2089-2350 (RAIE…VPEN), 2458-2706 (FKPA…IIQG), and 2808-3059 (DYAL…LKRR). ATP is bound by residues 1845–1852 (GPAGTGKT), 2127–2134 (GRTGSGKS), 2497–2504 (GNVGVGKT), and 2848–2855 (GVGGSGRK). Coiled-coil stretches lie at residues 3107–3193 (AAMK…LTKK), 3301–3384 (KRAK…SISE), and 3499–3519 (RLKV…NAIQ). The stalk stretch occupies residues 3107–3384 (AAMKKVAEEK…RVRWEASISE (278 aa)). AAA regions lie at residues 3443–3674 (LANP…EVNA) and 3890–4109 (ATTY…LLKS).

The I1 inner arm complex (also known as the f dynein complex) is a two-headed isoform composed of two heavy chains (1-alpha and 1-beta), three intermediate chains and three light chains. I1 occupies a specific position proximal to the first radial spoke and repeats every 96 nm along the length of the axoneme.

It localises to the cell projection. It is found in the cilium. Its subcellular location is the flagellum. The protein resides in the cytoplasm. The protein localises to the cytoskeleton. It localises to the flagellum axoneme. Its function is as follows. Force generating protein of eukaryotic cilia and flagella. Produces force towards the minus ends of microtubules. Dynein has ATPase activity; the force-producing power stroke is thought to occur on release of ADP. Required for assembly of the I1 inner arm complex and its targeting to the appropriate axoneme location. Also required for phototaxis. This is Dynein-1-beta heavy chain, flagellar inner arm I1 complex (DHC10) from Chlamydomonas reinhardtii (Chlamydomonas smithii).